We begin with the raw amino-acid sequence, 168 residues long: Ribosome-binding factor A (168 aa).

Basic and acidic residues predominate over residues 122 to 136; sequence VRRDARPAGDDDPYR. Residues 122-168 form a disordered region; it reads VRRDARPAGDDDPYRRPRPAAGEVDELSEVDELSEVDEYGGTARQEG. Residues 144–159 are compositionally biased toward acidic residues; that stretch reads EVDELSEVDELSEVDE.

The protein belongs to the RbfA family. Monomer. Binds 30S ribosomal subunits, but not 50S ribosomal subunits or 70S ribosomes.

The protein resides in the cytoplasm. Its function is as follows. One of several proteins that assist in the late maturation steps of the functional core of the 30S ribosomal subunit. Associates with free 30S ribosomal subunits (but not with 30S subunits that are part of 70S ribosomes or polysomes). Required for efficient processing of 16S rRNA. May interact with the 5'-terminal helix region of 16S rRNA. The sequence is that of Ribosome-binding factor A from Frankia casuarinae (strain DSM 45818 / CECT 9043 / HFP020203 / CcI3).